A 104-amino-acid chain; its full sequence is N(4)-acetylcytidine amidohydrolase (104 aa).

Residues 7-104 (TFFTRFEQDI…FWVIAFELVD (98 aa)) form the ASCH domain. Lys-21 serves as the catalytic Proton acceptor. Thr-24 functions as the Nucleophile in the catalytic mechanism. The active-site Proton donor is the Glu-74.

The protein belongs to the N(4)-acetylcytidine amidohydrolase family.

It carries out the reaction N(4)-acetylcytidine + H2O = cytidine + acetate + H(+). The enzyme catalyses N(4)-acetyl-2'-deoxycytidine + H2O = 2'-deoxycytidine + acetate + H(+). It catalyses the reaction N(4)-acetylcytosine + H2O = cytosine + acetate + H(+). Catalyzes the hydrolysis of N(4)-acetylcytidine (ac4C). This chain is N(4)-acetylcytidine amidohydrolase, found in Pasteurella multocida (strain Pm70).